Here is a 165-residue protein sequence, read N- to C-terminus: UPF0303 protein Bphyt_1734 (165 aa).

Belongs to the UPF0303 family.

The chain is UPF0303 protein Bphyt_1734 from Paraburkholderia phytofirmans (strain DSM 17436 / LMG 22146 / PsJN) (Burkholderia phytofirmans).